Here is a 451-residue protein sequence, read N- to C-terminus: Exodeoxyribonuclease 7 large subunit (451 aa).

Belongs to the XseA family. As to quaternary structure, heterooligomer composed of large and small subunits.

Its subcellular location is the cytoplasm. It carries out the reaction Exonucleolytic cleavage in either 5'- to 3'- or 3'- to 5'-direction to yield nucleoside 5'-phosphates.. Its function is as follows. Bidirectionally degrades single-stranded DNA into large acid-insoluble oligonucleotides, which are then degraded further into small acid-soluble oligonucleotides. The protein is Exodeoxyribonuclease 7 large subunit of Neisseria gonorrhoeae (strain ATCC 700825 / FA 1090).